Here is a 593-residue protein sequence, read N- to C-terminus: NADH-quinone oxidoreductase subunit C/D (593 aa).

An NADH dehydrogenase I subunit C region spans residues 1–184 (MTADNAIFIP…DPYSLTLAKQ (184 aa)). Residues 208-593 (DYMFLNLGPN…IDFVMADVDR (386 aa)) are NADH dehydrogenase I subunit D.

It in the N-terminal section; belongs to the complex I 30 kDa subunit family. The protein in the C-terminal section; belongs to the complex I 49 kDa subunit family. In terms of assembly, NDH-1 is composed of 13 different subunits. Subunits NuoB, CD, E, F, and G constitute the peripheral sector of the complex.

The protein resides in the cell inner membrane. The enzyme catalyses a quinone + NADH + 5 H(+)(in) = a quinol + NAD(+) + 4 H(+)(out). Its function is as follows. NDH-1 shuttles electrons from NADH, via FMN and iron-sulfur (Fe-S) centers, to quinones in the respiratory chain. The immediate electron acceptor for the enzyme in this species is believed to be ubiquinone. Couples the redox reaction to proton translocation (for every two electrons transferred, four hydrogen ions are translocated across the cytoplasmic membrane), and thus conserves the redox energy in a proton gradient. The protein is NADH-quinone oxidoreductase subunit C/D of Pseudomonas putida (strain ATCC 47054 / DSM 6125 / CFBP 8728 / NCIMB 11950 / KT2440).